Reading from the N-terminus, the 183-residue chain is UPF0114 protein HI_0507 (183 aa).

The next 3 membrane-spanning stretches (helical) occupy residues 30 to 50, 68 to 88, and 150 to 170; these read LQVP…YKFI, IMLG…LVMV, and TMMW…ALAY.

This sequence belongs to the UPF0114 family.

It localises to the cell membrane. This chain is UPF0114 protein HI_0507, found in Haemophilus influenzae (strain ATCC 51907 / DSM 11121 / KW20 / Rd).